The chain runs to 389 residues: Chaperone protein DnaJ (389 aa).

The J domain occupies 6–70 (DYYEILGLSK…EKRAQYDRFG (65 aa)). Residues 131-213 (GVRKDIDIPR…CSGAGRVRSR (83 aa)) form a CR-type zinc finger. Residues Cys-144, Cys-147, Cys-161, Cys-164, Cys-187, Cys-190, Cys-201, and Cys-204 each contribute to the Zn(2+) site. CXXCXGXG motif repeat units lie at residues 144–151 (CSTCSGTG), 161–168 (CPNCGGTG), 187–194 (CSACHGRG), and 201–208 (CPTCSGAG). The segment at 145-167 (STCSGTGAKPGTSPKRCPNCGGT) is disordered. The disordered stretch occupies residues 351–389 (LSNGKKPEAEERSRSDKQKSEKPRKSKGLFEKVKDAFES). The segment covering 355–389 (KKPEAEERSRSDKQKSEKPRKSKGLFEKVKDAFES) has biased composition (basic and acidic residues).

The protein belongs to the DnaJ family. In terms of assembly, homodimer. The cofactor is Zn(2+).

The protein localises to the cytoplasm. Functionally, participates actively in the response to hyperosmotic and heat shock by preventing the aggregation of stress-denatured proteins and by disaggregating proteins, also in an autonomous, DnaK-independent fashion. Unfolded proteins bind initially to DnaJ; upon interaction with the DnaJ-bound protein, DnaK hydrolyzes its bound ATP, resulting in the formation of a stable complex. GrpE releases ADP from DnaK; ATP binding to DnaK triggers the release of the substrate protein, thus completing the reaction cycle. Several rounds of ATP-dependent interactions between DnaJ, DnaK and GrpE are required for fully efficient folding. Also involved, together with DnaK and GrpE, in the DNA replication of plasmids through activation of initiation proteins. The protein is Chaperone protein DnaJ of Methanosarcina mazei (strain ATCC BAA-159 / DSM 3647 / Goe1 / Go1 / JCM 11833 / OCM 88) (Methanosarcina frisia).